A 116-amino-acid chain; its full sequence is uncharacterized protein (116 aa).

The CHY-type zinc-finger motif lies at 1–72 (MCKHVLNAQV…SDEYCPNCDN (72 aa)). The Zn(2+) site is built by cysteine 2, histidine 4, cysteine 16, cysteine 17, cysteine 23, cysteine 26, histidine 27, histidine 33, cysteine 45, cysteine 48, cysteine 67, and cysteine 70.

The protein localises to the cytoplasm. This is an uncharacterized protein from Schizosaccharomyces pombe (strain 972 / ATCC 24843) (Fission yeast).